Here is a 66-residue protein sequence, read N- to C-terminus: U10-theraphotoxin-Cg1a 2 (66 aa).

Positions 1-21 are cleaved as a signal peptide; the sequence is MKTSVLFVIFGLALLLCLSFA. Residues 22 to 29 constitute a propeptide that is removed on maturation; that stretch reads AELEDTGR. 3 disulfide bridges follow: Cys-31-Cys-46, Cys-38-Cys-51, and Cys-45-Cys-58.

It belongs to the neurotoxin 10 (Hwtx-1) family. 29 (Jztx-13) subfamily. Expressed by the venom gland.

Its subcellular location is the secreted. Its function is as follows. Probable ion channel inhibitor. This chain is U10-theraphotoxin-Cg1a 2, found in Chilobrachys guangxiensis (Chinese earth tiger tarantula).